Consider the following 315-residue polypeptide: Olfactory receptor 2V1 (315 aa).

Residues 1-31 (MGRWVNQSYTDGFFLLGIFSHSQTDLVLFSA) lie on the Extracellular side of the membrane. The N-linked (GlcNAc...) asparagine glycan is linked to Asn-6. Residues 32-52 (VMVVFTVALCGNVLLIFLIYL) traverse the membrane as a helical segment. At 53 to 58 (DAGLHT) the chain is on the cytoplasmic side. A helical transmembrane segment spans residues 59–79 (PMYFFLSQLSLMDLMLVCNIV). At 80–99 (PKMAANFLSGRKSISFVGCG) the chain is on the extracellular side. Cys-98 and Cys-180 are oxidised to a cystine. A helical transmembrane segment spans residues 100–120 (IQIGFFVSLVGSEGLLLGLMA). Over 121 to 149 (YDRYVAVSHPLHYPILMNQRVCLQITGSS) the chain is Cytoplasmic. Residues 150 to 170 (WAFGIIDGVIQMVAAMGLPYC) traverse the membrane as a helical segment. Residues 171–198 (GSRSVDHFFCEVQALLKLACADTSLFDT) are Extracellular-facing. A helical membrane pass occupies residues 199 to 219 (LLFACCVFMLLLPFSIIMASY). At 220–238 (ACILGAVLRIRSAQAWKKA) the chain is on the cytoplasmic side. A helical transmembrane segment spans residues 239–259 (LATCSSHLTAVTLFYGAAMFM). The Extracellular portion of the chain corresponds to 260–272 (YLRPRRYRAPSHD). The helical transmembrane segment at 273–293 (KVASIFYTVLTPMLNPLIYSL) threads the bilayer. Over 294–315 (RNGEVMGALRKGLDRCRIGSQH) the chain is Cytoplasmic.

Belongs to the G-protein coupled receptor 1 family.

It is found in the cell membrane. Functionally, odorant receptor. This is Olfactory receptor 2V1 (OR2V1) from Homo sapiens (Human).